The primary structure comprises 340 residues: Uroporphyrinogen decarboxylase (340 aa).

Substrate-binding positions include 21–25 (RQAGR), Asp71, Tyr148, Ser203, and His316.

Belongs to the uroporphyrinogen decarboxylase family. Homodimer.

It localises to the cytoplasm. The catalysed reaction is uroporphyrinogen III + 4 H(+) = coproporphyrinogen III + 4 CO2. It participates in porphyrin-containing compound metabolism; protoporphyrin-IX biosynthesis; coproporphyrinogen-III from 5-aminolevulinate: step 4/4. Functionally, catalyzes the decarboxylation of four acetate groups of uroporphyrinogen-III to yield coproporphyrinogen-III. The sequence is that of Uroporphyrinogen decarboxylase from Campylobacter jejuni subsp. jejuni serotype O:23/36 (strain 81-176).